Here is a 141-residue protein sequence, read N- to C-terminus: Putative pre-16S rRNA nuclease (141 aa).

Belongs to the YqgF nuclease family.

Its subcellular location is the cytoplasm. Could be a nuclease involved in processing of the 5'-end of pre-16S rRNA. This chain is Putative pre-16S rRNA nuclease, found in Cupriavidus necator (strain ATCC 17699 / DSM 428 / KCTC 22496 / NCIMB 10442 / H16 / Stanier 337) (Ralstonia eutropha).